We begin with the raw amino-acid sequence, 303 residues long: RELT-like protein 2 (303 aa).

A helical transmembrane segment spans residues 15–35; that stretch reads LYMLFLLVLVFFLMGLVGFMI. Disordered regions lie at residues 47-68, 135-214, and 249-303; these read RTSR…DDVN, CSRS…QPRT, and PCTL…AGGM. At serine 52 the chain carries Phosphoserine. Basic and acidic residues-rich tracts occupy residues 148 to 158 and 172 to 188; these read RSKEGKSRPRP and THIE…DGSP. Residues 194 to 212 show a composition bias toward gly residues; sequence GSGGGQEPGGSQAAGGGQP. The span at 274-295 shows a compositional bias: polar residues; sequence GLSSQEANGQPTKLDTSGQQES.

It belongs to the RELT family. Interacts with RELT, RELL1, OXSR1, PLSCR1 and TRAF2.

The protein resides in the cell membrane. Functionally, induces activation of MAPK14/p38 cascade, when overexpressed. Induces apoptosis, when overexpressed. This chain is RELT-like protein 2 (Rell2), found in Mus musculus (Mouse).